Reading from the N-terminus, the 211-residue chain is Pupal cuticle protein G1A (211 aa).

5 consecutive repeat copies span residues 13–16, 21–24, 33–36, 111–114, and 179–182.

Its function is as follows. Component of the cuticle of the pupa of Tenebrio molitor. This is Pupal cuticle protein G1A from Tenebrio molitor (Yellow mealworm beetle).